We begin with the raw amino-acid sequence, 507 residues long: Polygalacturonase (507 aa).

Positions 1–20 (MSMKFMAALAFLALQLIVMA) are cleaved as a signal peptide. A propeptide spanning residues 21–54 (AGEDQSAQIMLDSDTKQYHRSSRNLRKRVHHARH) is cleaved from the precursor. PbH1 repeat units lie at residues 215-241 (CDGV…DIFA), 242-263 (SKRF…AVGT), 265-285 (SSNI…SIGS), 295-316 (VSFV…RIKT), 324-345 (ASHI…LINQ), and 358-385 (RSAV…QLMC). Asp256 (proton donor) is an active-site residue. A glycan (N-linked (GlcNAc...) asparagine) is linked at Asn267. Residue His279 is part of the active site.

The protein belongs to the glycosyl hydrolase 28 family.

The protein localises to the secreted. The protein resides in the cell wall. It catalyses the reaction (1,4-alpha-D-galacturonosyl)n+m + H2O = (1,4-alpha-D-galacturonosyl)n + (1,4-alpha-D-galacturonosyl)m.. The chain is Polygalacturonase (JNA2) from Juniperus ashei (Ozark white cedar).